The chain runs to 1408 residues: DNA-directed RNA polymerase subunit beta' (1408 aa).

Positions 70, 72, 85, and 88 each coordinate Zn(2+). 3 residues coordinate Mg(2+): D460, D462, and D464. Positions 822, 896, 903, and 906 each coordinate Zn(2+). Residues 1386-1408 (DTGEAPPLSEEETGEIRNSGYAV) form a disordered region.

Belongs to the RNA polymerase beta' chain family. As to quaternary structure, the RNAP catalytic core consists of 2 alpha, 1 beta, 1 beta' and 1 omega subunit. When a sigma factor is associated with the core the holoenzyme is formed, which can initiate transcription. Requires Mg(2+) as cofactor. The cofactor is Zn(2+).

It catalyses the reaction RNA(n) + a ribonucleoside 5'-triphosphate = RNA(n+1) + diphosphate. Its function is as follows. DNA-dependent RNA polymerase catalyzes the transcription of DNA into RNA using the four ribonucleoside triphosphates as substrates. The polypeptide is DNA-directed RNA polymerase subunit beta' (Nitrosospira multiformis (strain ATCC 25196 / NCIMB 11849 / C 71)).